Reading from the N-terminus, the 208-residue chain is Large ribosomal subunit protein uL4 (208 aa).

Residues 50-83 (VKTRAEVSGGGRKPWKQKGTGRARQGSIRAPQWK) are disordered.

It belongs to the universal ribosomal protein uL4 family. As to quaternary structure, part of the 50S ribosomal subunit.

One of the primary rRNA binding proteins, this protein initially binds near the 5'-end of the 23S rRNA. It is important during the early stages of 50S assembly. It makes multiple contacts with different domains of the 23S rRNA in the assembled 50S subunit and ribosome. Its function is as follows. Forms part of the polypeptide exit tunnel. The polypeptide is Large ribosomal subunit protein uL4 (Mycoplasma mycoides subsp. mycoides SC (strain CCUG 32753 / NCTC 10114 / PG1)).